The primary structure comprises 291 residues: 33 kDa chaperonin (291 aa).

2 disulfide bridges follow: Cys-237-Cys-239 and Cys-270-Cys-273.

The protein belongs to the HSP33 family. Under oxidizing conditions two disulfide bonds are formed involving the reactive cysteines. Under reducing conditions zinc is bound to the reactive cysteines and the protein is inactive.

The protein resides in the cytoplasm. Functionally, redox regulated molecular chaperone. Protects both thermally unfolding and oxidatively damaged proteins from irreversible aggregation. Plays an important role in the bacterial defense system toward oxidative stress. This Bacillus cereus (strain G9842) protein is 33 kDa chaperonin.